Here is a 959-residue protein sequence, read N- to C-terminus: Translation initiation factor IF-2 (959 aa).

Residues 1 to 10 (MSDKTNDDKT) are compositionally biased toward basic and acidic residues. The disordered stretch occupies residues 1-374 (MSDKTNDDKT…SQMQETREKI (374 aa)). The span at 27–37 (EQSTVRQNFSH) shows a compositional bias: polar residues. Low complexity-rich tracts occupy residues 63-118 (AAAA…VTKP) and 128-138 (QRPGGQQAQRP). 2 stretches are compositionally biased toward basic and acidic residues: residues 154-225 (SEMD…EAAK) and 232-241 (ARSERRDDAR). Low complexity predominate over residues 246–284 (GARPQQAGRPQGGRPQPAGRPQQGSPRPAPIIADAAPIA). Basic and acidic residues predominate over residues 318-333 (PEVRAPKVVKGEDDRR). A tr-type G domain is found at 457-626 (SRPPVVTIMG…LLQAEMLDLK (170 aa)). The G1 stretch occupies residues 466–473 (GHVDHGKT). 466–473 (GHVDHGKT) contacts GTP. The segment at 491–495 (GITQH) is G2. The tract at residues 512-515 (DTPG) is G3. Residues 512 to 516 (DTPGH) and 566 to 569 (NKID) each bind GTP. Residues 566 to 569 (NKID) form a G4 region. Positions 602 to 604 (SAK) are G5.

This sequence belongs to the TRAFAC class translation factor GTPase superfamily. Classic translation factor GTPase family. IF-2 subfamily.

The protein localises to the cytoplasm. Functionally, one of the essential components for the initiation of protein synthesis. Protects formylmethionyl-tRNA from spontaneous hydrolysis and promotes its binding to the 30S ribosomal subunits. Also involved in the hydrolysis of GTP during the formation of the 70S ribosomal complex. The polypeptide is Translation initiation factor IF-2 (Brucella suis biovar 1 (strain 1330)).